The chain runs to 1890 residues: Putative aminopeptidase-2 (1890 aa).

Positions 1 to 20 are cleaved as a signal peptide; sequence MRRKLLLLLCFIGLFSLIST. N-linked (GlcNAc...) asparagine glycosylation occurs at N110. Residues E220 and 354–358 each bind substrate; that span reads GAMEN. H390 contacts Zn(2+). E391 (proton acceptor) is an active-site residue. Zn(2+)-binding residues include H394 and E413. 7 N-linked (GlcNAc...) asparagine glycosylation sites follow: N534, N581, N785, N803, N914, N1024, and N1094. E1143 is a binding site for substrate. A glycan (N-linked (GlcNAc...) asparagine) is linked at N1245. 1280 to 1284 provides a ligand contact to substrate; the sequence is GAMEN. Position 1316 (H1316) interacts with Zn(2+). Catalysis depends on E1317, which acts as the Proton acceptor. Residues H1320 and E1339 each contribute to the Zn(2+) site. N1451, N1521, N1826, and N1841 each carry an N-linked (GlcNAc...) asparagine glycan.

Belongs to the peptidase M1 family. Zn(2+) serves as cofactor.

Its function is as follows. Putative aminopeptidase which plays a role in oocyte maturation. In Caenorhabditis elegans, this protein is Putative aminopeptidase-2.